The primary structure comprises 105 residues: Neuropeptide-like protein 32 (105 aa).

The N-terminal stretch at 1–22 (MRQFNLLLVFCLIALTALPVFS) is a signal peptide. A propeptide spanning residues 23–54 (FPNGLTMDSIDMEPMGAFDENGAADESPRVKR) is cleaved from the precursor. Position 59 is a glycine amide (glycine 59). Tryptophan 64 bears the Tryptophan amide mark. Glycine amide is present on residues glycine 68, glycine 73, and glycine 80. Tryptophan 86 is modified (tryptophan amide). A glycine amide mark is found at glycine 91 and glycine 98. At tryptophan 103 the chain carries Tryptophan amide.

Belongs to the YARP (YGGW-amide related peptide) family.

It localises to the secreted. May have antimicrobial activity. This chain is Neuropeptide-like protein 32 (nlp-32), found in Caenorhabditis elegans.